The primary structure comprises 130 residues: Putative pre-16S rRNA nuclease (130 aa).

This sequence belongs to the YqgF nuclease family.

The protein localises to the cytoplasm. Could be a nuclease involved in processing of the 5'-end of pre-16S rRNA. The sequence is that of Putative pre-16S rRNA nuclease from Buchnera aphidicola subsp. Cinara cedri (strain Cc).